A 428-amino-acid polypeptide reads, in one-letter code: Enolase (428 aa).

Position 162 (Gln162) interacts with (2R)-2-phosphoglycerate. Catalysis depends on Glu204, which acts as the Proton donor. 3 residues coordinate Mg(2+): Asp241, Glu288, and Asp315. Lys340, Arg369, Ser370, and Lys391 together coordinate (2R)-2-phosphoglycerate. Lys340 functions as the Proton acceptor in the catalytic mechanism.

Belongs to the enolase family. It depends on Mg(2+) as a cofactor.

The protein localises to the cytoplasm. The protein resides in the secreted. Its subcellular location is the cell surface. It catalyses the reaction (2R)-2-phosphoglycerate = phosphoenolpyruvate + H2O. It functions in the pathway carbohydrate degradation; glycolysis; pyruvate from D-glyceraldehyde 3-phosphate: step 4/5. Its function is as follows. Catalyzes the reversible conversion of 2-phosphoglycerate (2-PG) into phosphoenolpyruvate (PEP). It is essential for the degradation of carbohydrates via glycolysis. This is Enolase from Azobacteroides pseudotrichonymphae genomovar. CFP2.